Here is a 523-residue protein sequence, read N- to C-terminus: Lysine-specific demethylase 4D (523 aa).

In terms of domain architecture, JmjN spans 18 to 60 (IMIFHPTKEEFNDFDKYIAYMESQGAHRAGLAKIIPPKEWKAR). E26 and E27 each carry polyADP-ribosyl glutamic acid. Y136 serves as a coordination point for 2-oxoglutarate. In terms of domain architecture, JmjC spans 146–312 (DENTKQWNLG…YGKMASQCSC (167 aa)). Residues H192 and E194 each contribute to the Fe cation site. 2-oxoglutarate-binding residues include N202 and K210. Zn(2+) is bound by residues C238 and H244. K245 contributes to the 2-oxoglutarate binding site. H280 contributes to the Fe cation binding site. Zn(2+) is bound by residues C310 and C312. The disordered stretch occupies residues 407–523 (RRSAVSGTAT…ASGCSWAPVP (117 aa)). The span at 428 to 440 (KPSSTPSSTPGPS) shows a compositional bias: low complexity. Over residues 448-458 (NGRRGRGRPPQ) the composition is skewed to basic residues.

Belongs to the JHDM3 histone demethylase family. Requires Fe(2+) as cofactor. Ubiquitinated via 'Lys-63'-linked ubiquitin chains. Deubiquitinated by USP14 with the help of TRIM14 leading to stabilization.

The protein localises to the nucleus. The catalysed reaction is N(6),N(6),N(6)-trimethyl-L-lysyl(9)-[histone H3] + 2 2-oxoglutarate + 2 O2 = N(6)-methyl-L-lysyl(9)-[histone H3] + 2 formaldehyde + 2 succinate + 2 CO2. Its function is as follows. Histone demethylase that specifically demethylates 'Lys-9' of histone H3, thereby playing a central role in histone code. Does not demethylate histone H3 'Lys-4', H3 'Lys-27', H3 'Lys-36' nor H4 'Lys-20'. Demethylates both di- and trimethylated H3 'Lys-9' residue, while it has no activity on monomethylated residues. Demethylation of Lys residue generates formaldehyde and succinate. The protein is Lysine-specific demethylase 4D (KDM4D) of Homo sapiens (Human).